The sequence spans 212 residues: Transmembrane emp24 domain-containing protein p24delta7 (212 aa).

The first 22 residues, 1 to 22, serve as a signal peptide directing secretion; it reads MNHRRSSIVLLILSILSPVTLS. Over 23–179 the chain is Lumenal; sequence IRYELLSGHT…HNLNIATNSK (157 aa). The region spanning 32-147 is the GOLD domain; the sequence is TKCISEEIHA…VETMEFEVKK (116 aa). The stretch at 162-175 forms a coiled coil; the sequence is LRDREEEMHNLNIA. Residue Arg-165 is modified to Omega-N-methylated arginine. Residues 180–200 traverse the membrane as a helical segment; that stretch reads MAWLSFVSLAVCLSVAGLQFW. At 201–212 the chain is on the cytoplasmic side; that stretch reads HLKTFFQKKKLI. A COPII vesicle coat-binding motif is present at residues 205–206; sequence FF. The short motif at 205-212 is the COPI vesicle coat-binding element; the sequence is FFQKKKLI.

This sequence belongs to the EMP24/GP25L family. In terms of assembly, probably oligomerizes with other members of the EMP24/GP25L family. Associates with the COPI vesicle coat (coatomer). Associates with the COPII vesicle coat (coatomer).

It localises to the endoplasmic reticulum membrane. The protein resides in the golgi apparatus. It is found in the cis-Golgi network membrane. The protein localises to the golgi stack membrane. In terms of biological role, involved in vesicular protein trafficking. Mainly functions in the early secretory pathway. Thought to act as cargo receptor at the lumenal side for incorporation of secretory cargo molecules into transport vesicles and to be involved in vesicle coat formation at the cytoplasmic side. This is Transmembrane emp24 domain-containing protein p24delta7 from Arabidopsis thaliana (Mouse-ear cress).